A 782-amino-acid polypeptide reads, in one-letter code: General transcription and DNA repair factor IIH helicase/translocase subunit XPB (782 aa).

Basic and acidic residues predominate over residues 1–11 (MGKRDRADRDK). Disordered regions lie at residues 1–51 (MGKR…ESGT) and 218–241 (SAISKTAESSGGPSTSRVTDPQGK). A Nuclear localization signal motif is present at residues 6–18 (RADRDKKKSRKRH). The segment covering 21 to 30 (DEEDDEEDAP) has biased composition (acidic residues). Residues 218 to 236 (SAISKTAESSGGPSTSRVT) are compositionally biased toward polar residues. Positions 327 to 488 (MFGNGRARSG…DLNFLIGPKL (162 aa)) constitute a Helicase ATP-binding domain. Residue 340 to 347 (LPCGAGKS) coordinates ATP. The short motif at 441–444 (DEVH) is the DEVH box element. The region spanning 542–702 (RACQFLIKFH…LAGMEEEDLA (161 aa)) is the Helicase C-terminal domain. S686 bears the Phosphoserine mark. S751 carries the post-translational modification Phosphoserine; by CK2.

This sequence belongs to the helicase family. RAD25/XPB subfamily. As to quaternary structure, component of the 7-subunit TFIIH core complex composed of XPB/ERCC3, XPD/ERCC2, GTF2H1, GTF2H2, GTF2H3, GTF2H4 and GTF2H5, which is active in NER. The core complex associates with the 3-subunit CDK-activating kinase (CAK) module composed of CCNH/cyclin H, CDK7 and MNAT1 to form the 10-subunit holoenzyme (holo-TFIIH) active in transcription. Interacts with PUF60. Interacts with ATF7IP. Interacts with KAT2A; leading to KAT2A recruitment to promoters and acetylation of histones. Part of TBP-based Pol II pre-initiation complex (PIC), in which Pol II core assembles with general transcription factors and other specific initiation factors including GTF2E1, GTF2E2, GTF2F1, GTF2F2, TCEA1, ERCC2, ERCC3, GTF2H2, GTF2H3, GTF2H4, GTF2H5, GTF2A1, GTF2A2, GTF2B and TBP; this large multi-subunit PIC complex mediates DNA unwinding and targets Pol II core to the transcription start site where the first phosphodiester bond forms. Post-translationally, phosphorylation on Ser-751 by CK2 controls the 5'-excision activity of ERCC1-XPF endonuclease; phosphorylated protein inhibits the excision activity and thus NER. Dephosphorylation reactivates the 5'-excision step. Phosphorylation has no effect on transcription or the 3'-5' helicase activity.

It localises to the nucleus. The catalysed reaction is Couples ATP hydrolysis with the unwinding of duplex DNA by translocating in the 3'-5' direction.. The enzyme catalyses ATP + H2O = ADP + phosphate + H(+). Its activity is regulated as follows. Phosphorylation on Ser-751 by CK2 controls the 5'-excision activity of ERCC1-XPF endonuclease; phosphorylated protein inhibits the excision activity and thus NER. ATPase activity is stimulated by TFIIH subunit p52 (GTF2H4). DNA translocase activity by this subunit in TFIIH is stimulated by XPA, ERCC5/XPG and XFP plus ERCC1. In terms of biological role, ATP-dependent 3'-5' DNA helicase/translocase; binds dsDNA rather than ssDNA, unzipping it in a translocase rather than classical helicase activity. Component of the general transcription and DNA repair factor IIH (TFIIH) core complex. When complexed to CDK-activating kinase (CAK), involved in RNA transcription by RNA polymerase II. The ATPase activity of XPB/ERCC3, but not its helicase activity, is required for DNA opening; it may wrap around the damaged DNA wedging it open, causing localized melting and twisting that allows XPD/ERCC2 helicase to anchor. The ATP-dependent helicase activity of XPB/ERCC3 may be required for promoter escape. Also involved in transcription-coupled nucleotide excision repair (NER) of damaged DNA. In NER, TFIIH acts by opening DNA around the lesion to allow the excision of the damaged oligonucleotide and its replacement by a new DNA fragment. The structure of the TFIIH transcription complex differs from the NER-TFIIH complex; large movements by XPD/ERCC2 and XPB/ERCC3 are stabilized by XPA. This chain is General transcription and DNA repair factor IIH helicase/translocase subunit XPB (ERCC3), found in Pongo abelii (Sumatran orangutan).